The sequence spans 348 residues: Protein RecA (348 aa).

Residue 67–74 participates in ATP binding; sequence GPESSGKT.

The protein belongs to the RecA family.

Its subcellular location is the cytoplasm. Its function is as follows. Can catalyze the hydrolysis of ATP in the presence of single-stranded DNA, the ATP-dependent uptake of single-stranded DNA by duplex DNA, and the ATP-dependent hybridization of homologous single-stranded DNAs. It interacts with LexA causing its activation and leading to its autocatalytic cleavage. This chain is Protein RecA, found in Amycolatopsis mediterranei (strain U-32).